The primary structure comprises 914 residues: Protein GAMETE EXPRESSED 2 (914 aa).

Filamin repeat units lie at residues 249-382 and 391-485; these read IGYC…IKEV and ACSV…DVNV. Residues 893-913 form a helical membrane-spanning segment; that stretch reads LVVVPFSFFSIKLFSLLMVLI.

As to expression, in tricellular pollen, expressed in mature sperm cells but not in the vegetative cell. In bicellular pollen, detected in the progenitor generative cell. Detected in the egg cell within the female gametophyte.

The protein localises to the cell membrane. The polypeptide is Protein GAMETE EXPRESSED 2 (GEX2) (Arabidopsis thaliana (Mouse-ear cress)).